The primary structure comprises 115 residues: Cycloviolacin-O13 (115 aa).

The first 22 residues, 1–22 (MDAKKMFVALVLIATFALPSLA), serve as a signal peptide directing secretion. Residues 23 to 81 (TFEKDFITPETIQAILKKSAPLSNIMLEEDVINALLKSKTVISNPIIEEAFLKNSNGLN) constitute a propeptide that is removed on maturation. The segment at residues 82–111 (GIPCGESCVWIPCISAAIGCSCKSKVCYRN) is a cross-link (cyclopeptide (Gly-Asn)). 3 disulfides stabilise this stretch: C85-C101, C89-C103, and C94-C108. A propeptide spanning residues 112 to 115 (SLDN) is cleaved from the precursor.

In terms of processing, cycloviolacin-O13 is a cyclic peptide. Expressed in leaves, petals, petioles, roots and runners (at protein level).

Probably participates in a plant defense mechanism. Has hemolytic activity. This is Cycloviolacin-O13 from Viola odorata (Sweet violet).